The following is a 184-amino-acid chain: Myeloproliferative leukemia protein (184 aa).

Residues 26–30 (WSAWS) carry the WSXWS motif motif. The chain crosses the membrane as a helical span at residues 44–64 (ITLVTALLLVLSLSALLGLLL). The Box 1 motif signature appears at 80–88 (LWPSLPDLH).

This sequence belongs to the type I cytokine receptor family. Type 1 subfamily.

Its subcellular location is the membrane. Functionally, truncated form of the receptor for thrombopoietin. The sequence is that of Myeloproliferative leukemia protein (V-MPL) from Mus musculus (Mouse).